Here is a 240-residue protein sequence, read N- to C-terminus: Ubiquinone biosynthesis O-methyltransferase (240 aa).

The S-adenosyl-L-methionine site is built by Arg-44, Gly-64, Asp-85, and Met-129.

The protein belongs to the methyltransferase superfamily. UbiG/COQ3 family.

The catalysed reaction is a 3-demethylubiquinol + S-adenosyl-L-methionine = a ubiquinol + S-adenosyl-L-homocysteine + H(+). It catalyses the reaction a 3-(all-trans-polyprenyl)benzene-1,2-diol + S-adenosyl-L-methionine = a 2-methoxy-6-(all-trans-polyprenyl)phenol + S-adenosyl-L-homocysteine + H(+). The protein operates within cofactor biosynthesis; ubiquinone biosynthesis. O-methyltransferase that catalyzes the 2 O-methylation steps in the ubiquinone biosynthetic pathway. This Escherichia coli O127:H6 (strain E2348/69 / EPEC) protein is Ubiquinone biosynthesis O-methyltransferase.